Here is a 506-residue protein sequence, read N- to C-terminus: ATP synthase subunit alpha (506 aa).

171–178 (GDRQTGKT) serves as a coordination point for ATP.

This sequence belongs to the ATPase alpha/beta chains family. As to quaternary structure, F-type ATPases have 2 components, CF(1) - the catalytic core - and CF(0) - the membrane proton channel. CF(1) has five subunits: alpha(3), beta(3), gamma(1), delta(1), epsilon(1). CF(0) has four main subunits: a(1), b(1), b'(1) and c(9-12).

The protein resides in the cellular thylakoid membrane. The enzyme catalyses ATP + H2O + 4 H(+)(in) = ADP + phosphate + 5 H(+)(out). Produces ATP from ADP in the presence of a proton gradient across the membrane. The alpha chain is a regulatory subunit. The sequence is that of ATP synthase subunit alpha from Nostoc sp. (strain PCC 7120 / SAG 25.82 / UTEX 2576).